Reading from the N-terminus, the 226-residue chain is Exopolysaccharide production protein ExoY (226 aa).

The chain crosses the membrane as a helical span at residues 34–54 (VLIAILALIALSPLFLLVMGL).

Belongs to the bacterial sugar transferase family.

It is found in the cell membrane. Its pathway is glycan metabolism; exopolysaccharide biosynthesis. Functionally, needed for the addition of the first sugar (galactose) to the isoprenoid carrier. May function as a sugar transferase. This chain is Exopolysaccharide production protein ExoY (exoY), found in Sinorhizobium fredii (strain NBRC 101917 / NGR234).